The chain runs to 269 residues: Ice-binding protein (269 aa).

The first 24 residues, 1 to 24, serve as a signal peptide directing secretion; the sequence is MLKINRKYAIILAIVAFSSFQTEA. 7 short sequence motifs (probable ice-binding motif (T/S-X-T)) span residues 45–47, 65–67, 128–130, 154–156, 180–182, 198–200, and 218–220; these read TVT, SAT, SAQ, TLT, SIT, and AVT. Positions 240–263 are PEP C-terminal anchor; it reads VPEPDSSLAVLGSGLVSLLFAFRK. Residues 245–261 form a helical membrane-spanning segment; sequence SSLAVLGSGLVSLLFAF.

This sequence belongs to the ice-binding protein family.

Its subcellular location is the cell outer membrane. In terms of biological role, a probable ice-binding protein that has ice-structuring activities in vitro. Thought not to anchor the cyanobacterium to ice surfaces, as its habitat is shallow puddles fed by glacier meltwater. In Nostoc sp. (strain HG1), this protein is Ice-binding protein.